We begin with the raw amino-acid sequence, 160 residues long: Nucleotide-binding protein VSAL_I1728 (160 aa).

Belongs to the YajQ family.

Its function is as follows. Nucleotide-binding protein. The protein is Nucleotide-binding protein VSAL_I1728 of Aliivibrio salmonicida (strain LFI1238) (Vibrio salmonicida (strain LFI1238)).